The primary structure comprises 240 residues: Ribonuclease PH (240 aa).

Phosphate contacts are provided by residues arginine 87 and 125–127 (GTR).

This sequence belongs to the RNase PH family. As to quaternary structure, homohexameric ring arranged as a trimer of dimers.

It carries out the reaction tRNA(n+1) + phosphate = tRNA(n) + a ribonucleoside 5'-diphosphate. In terms of biological role, phosphorolytic 3'-5' exoribonuclease that plays an important role in tRNA 3'-end maturation. Removes nucleotide residues following the 3'-CCA terminus of tRNAs; can also add nucleotides to the ends of RNA molecules by using nucleoside diphosphates as substrates, but this may not be physiologically important. Probably plays a role in initiation of 16S rRNA degradation (leading to ribosome degradation) during starvation. The chain is Ribonuclease PH from Pseudomonas putida (strain ATCC 47054 / DSM 6125 / CFBP 8728 / NCIMB 11950 / KT2440).